Reading from the N-terminus, the 681-residue chain is Protein hook (681 aa).

The Calponin-homology (CH) domain maps to 6 to 123 (NEMYYSLLEW…RLLQLVLGCA (118 aa)). Coiled coils occupy residues 135 to 439 (EIMS…LKCG) and 482 to 584 (QTAL…KYRK).

The protein belongs to the hook family. As to quaternary structure, homodimer. Interacts with microtubules via its N-terminus.

The protein localises to the cytoplasm. The protein resides in the cytoskeleton. Its subcellular location is the endosome. It is found in the synapse. Its function is as follows. Involved in endocytic trafficking by stabilizing organelles of the endocytic pathway. Probably acts as a cytoskeletal linker protein required to tether endosome vesicles to the cytoskeleton. Involved in modulation of endocytosis at stages required for down-regulation of membrane proteins that control synapse size. Not involved in synaptic vesicle recycling. Required in R7 cells for boss endocytosis into multivesicular bodies (MVBs). Has a role in regulating adult longevity. The sequence is that of Protein hook from Drosophila ananassae (Fruit fly).